The following is a 352-amino-acid chain: Small ribosomal subunit biogenesis GTPase RsgA (352 aa).

Positions 1-21 are enriched in basic residues; the sequence is MKKNKLSKNQHRRIQAHHQYR. The tract at residues 1 to 38 is disordered; sequence MKKNKLSKNQHRRIQAHHQYRLHPTSLTDDKNNQLDDA. One can recognise a CP-type G domain in the interval 116-278; the sequence is FYDGIKPMAA…LIDSPGIREF (163 aa). Residues 164 to 167 and 218 to 226 contribute to the GTP site; these read NKID and GQSGVGKSS. Residues Cys-302, Cys-307, His-309, and Cys-315 each contribute to the Zn(2+) site.

Belongs to the TRAFAC class YlqF/YawG GTPase family. RsgA subfamily. In terms of assembly, monomer. Associates with 30S ribosomal subunit, binds 16S rRNA. The cofactor is Zn(2+).

Its subcellular location is the cytoplasm. One of several proteins that assist in the late maturation steps of the functional core of the 30S ribosomal subunit. Helps release RbfA from mature subunits. May play a role in the assembly of ribosomal proteins into the subunit. Circularly permuted GTPase that catalyzes slow GTP hydrolysis, GTPase activity is stimulated by the 30S ribosomal subunit. The chain is Small ribosomal subunit biogenesis GTPase RsgA from Hamiltonella defensa subsp. Acyrthosiphon pisum (strain 5AT).